A 188-amino-acid chain; its full sequence is CyanoP (188 aa).

The N-terminal stretch at 1 to 23 (MLKKSLSTAVVLVTLLLSFTLTA) is a signal peptide. The N-palmitoyl cysteine moiety is linked to residue C24. A lipid anchor (S-diacylglycerol cysteine) is attached at C24.

It belongs to the PsbP family. CyanoP subfamily. As to quaternary structure, monomer. Present in about 3% of photosystem II (PSII) preparations. Purifies with partially assembled PSII complexes, in addition to a small amount of monomeric and dimeric PSII, and trimeric PSI.

The protein resides in the cellular thylakoid membrane. Plays a role in the early stages of photosystem II (PSII) assembly; binds to D2 (psbD) and may facilitate its incorporation into PSII. Required for optimal photoautotrophic growth in the absence of Ca(2+) or Cl(-), functions in optimizing PSII water oxidation/O(2) evolving activity. Might be involved in assembly of the oxygen evolving complex. The protein is CyanoP of Synechocystis sp. (strain ATCC 27184 / PCC 6803 / Kazusa).